The primary structure comprises 277 residues: Large ribosomal subunit protein uL2 (277 aa).

The tract at residues 212-277 (RWRGKRPHVR…KFIVRGRKSK (66 aa)) is disordered. A compositionally biased stretch (basic residues) spans 254–277 (TAGKKTRDKKKASTKFIVRGRKSK).

The protein belongs to the universal ribosomal protein uL2 family. Part of the 50S ribosomal subunit. Forms a bridge to the 30S subunit in the 70S ribosome.

One of the primary rRNA binding proteins. Required for association of the 30S and 50S subunits to form the 70S ribosome, for tRNA binding and peptide bond formation. It has been suggested to have peptidyltransferase activity; this is somewhat controversial. Makes several contacts with the 16S rRNA in the 70S ribosome. This is Large ribosomal subunit protein uL2 from Leuconostoc citreum (strain KM20).